The chain runs to 289 residues: Deleted in azoospermia-like (289 aa).

The tract at residues 1–20 (MSANAEAQCGSISEDNTHSS) is disordered. Residues 36 to 117 (NTVFVGGIDI…PAIRKQQNLC (82 aa)) form the RRM domain. A DAZ domain is found at 162–187 (TYAYSSPAVLIQQQVPVGYQPAYNYQ).

The protein belongs to the RRM DAZ family.

It is found in the cytoplasm. Functionally, RNA-binding protein, which probably plays a central role in gametogenesis in both males and females. Acts by binding to the 3'-UTR of mRNA, specifically recognizing GUU triplets, and promoting the translation of key transcripts. In Gallus gallus (Chicken), this protein is Deleted in azoospermia-like (DAZL).